The following is a 1489-amino-acid chain: MALPEANMSSTRSEQSSRSHDTIVGNEQPHSEKPAASAPGDQMSSDDEDEGPQTEEMIRRHSIVRDLARNYTNTSHHFTGSSADLFNAADANSPLNPSSENFNARAWARAMAKTMGENGSGFRQSGLCFQDMNVFGYGAETDYQKDVGNVWLGLPDMVHQMISPNANKRRIDILRGFDGVINAGEMCVVLGPPGSGCSTFLKSISGETNGIYIDDSTYFNYNGIPAEEMHKSHAGETIYTAEVDIHFPMLSVGDTLTFAARARCPQNLPPGIDHNLYSEHMRDVVMAMYGISHTINTQVGDNYIRGVSGGERKRVTIAEATLSNAPFQCWDNSTRGLDSANAIEFCKTLRLQSELFGQTCAVSIYQAPQTAYDLFDKALVIYEGRQIFFGPADEAKAYFINLGFECPDRQTTPDFLTSMTAPSERVVRPGWENKVPRTPDEFHARWKESQQYQIVRAEIESYKSLYPLNGSSADAFRENKHSAQAKGQRLKSPFTLSYMQQVQLCLWRGFRRLLGSPGVTIFQLIANTAVAFIASSLFYNMKPETGDFFKRGATLFLAVLSNAFASALEILTQYSQRPIVEKQARYAFYHPSAEAFASILVDMPYKITNSILFNVTLYFMTNLNRDAGAFFFFLLVSFIMVLAMSGVFRSIASLSRTLSQAMVPASLLILALVIFAGFVVPVDYMLGWCRWINYLDPVAYGFESLMVNEFSGRNFTCTAFVPNAQIPGYADVGGLNRACSTVGAIPGQSYVNGDAYINLEYKYFHAHKWRNVGILIAMTIFNHVVYIVATEFISAKKSKGEVLVFRRSNMPSKAKSDPEASSSRPIPTTEKNNNEVANIQGSTSVFHWNDVCYDIKIKGEPRRILDHVDGWVKPGTLTALMGVSGAGKTTLLDCLADRISMGVITGEMLVDGKIRDSSFQRRTGYVQQQDLHLETSTVREALTFSALLRQPASTPREEKIAYVDEVIKLLDMQEYADAVVGVLGEGLNVEQRKRLTIGVELAAKPPLLLFVDEPTSGLDSQTSWAILDLLEKLSKAGQSILCTIHQPSAMLFQRFDRLLFLAKGGRTIYFGDIGKNSETLTNYFVKHGSQECPNGENPAEWMLEVIGAAPGSHTDIDWHQTWRDSSEYQAVQTELQRLKAEGSANSVDQKSDPESYREFAAPFGQQLLIATKRVFEQYWRTPSYIYSKAALCIQVGLFLGLVFLNAPLSLRGLQNQMFAIFQMLTVFGQLVQMQMPHFVTQRSLYEVRERPSKTYSWKVFMLSQIIAEIPWNTLMSVFLFVCIYYPVGFNKNAEFAGQTAERGGLMWLLIWQFLIFTCTFAHAAIAITDTAEAGGNLANVVFMMSLFFCGVLAAPDKMPGFWIWMYRVSPFTYLVSAILSTGIANAEVKCAANELTTFNPTNGTTCGEYMDSYIKAAGGYLTNPDATSDCKFCTIKSTNVYLKALSASYDDRWRNFGIGMVYIVVNIVGALFLYWLIRMPKNKNKKKTA.

The interval 1–55 is disordered; that stretch reads MALPEANMSSTRSEQSSRSHDTIVGNEQPHSEKPAASAPGDQMSSDDEDEGPQTE. Asn7 carries N-linked (GlcNAc...) asparagine glycosylation. The span at 44-53 shows a compositional bias: acidic residues; sequence SSDDEDEGPQ. Asn70, Asn73, Asn118, Asn332, and Asn469 each carry an N-linked (GlcNAc...) asparagine glycan. Residues 152-408 form the ABC transporter 1 domain; sequence LGLPDMVHQM…FINLGFECPD (257 aa). 5 helical membrane-spanning segments follow: residues 513-533, 552-572, 599-619, 628-648, and 662-682; these read LLGSPGVTIFQLIANTAVAFI, GATLFLAVLSNAFASALEILT, ILVDMPYKITNSILFNVTLYF, GAFFFFLLVSFIMVLAMSGVF, and MVPASLLILALVIFAGFVVPV. N-linked (GlcNAc...) asparagine glycosylation occurs at Asn714. The chain crosses the membrane as a helical span at residues 773 to 793; it reads GILIAMTIFNHVVYIVATEFI. The disordered stretch occupies residues 811-834; it reads PSKAKSDPEASSSRPIPTTEKNNN. Residues 819–834 show a composition bias toward polar residues; the sequence is EASSSRPIPTTEKNNN. Positions 846 to 1088 constitute an ABC transporter 2 domain; that stretch reads FHWNDVCYDI…TLTNYFVKHG (243 aa). ATP is bound at residue 882-889; it reads GVSGAGKT. The next 5 helical transmembrane spans lie at 1190–1210, 1218–1238, 1269–1289, 1307–1327, and 1333–1353; these read ALCIQVGLFLGLVFLNAPLSL, FAIFQMLTVFGQLVQMQMPHF, IPWNTLMSVFLFVCIYYPVGF, WLLIWQFLIFTCTFAHAAIAI, and AGGNLANVVFMMSLFFCGVLA. A glycan (N-linked (GlcNAc...) asparagine) is linked at Asn1402. The chain crosses the membrane as a helical span at residues 1457–1477; it reads GIGMVYIVVNIVGALFLYWLI.

It belongs to the ABC transporter superfamily. ABCG family. PDR (TC 3.A.1.205) subfamily.

The protein resides in the cell membrane. It localises to the vacuole membrane. Functionally, ABC transporter involved in zearalenone production. In Gibberella zeae (strain ATCC MYA-4620 / CBS 123657 / FGSC 9075 / NRRL 31084 / PH-1) (Wheat head blight fungus), this protein is ZEB2-regulated ABC transporter 1.